Reading from the N-terminus, the 560-residue chain is Eukaryotic translation initiation factor 3 subunit D-1 (560 aa).

The interval 98-166 is disordered; the sequence is VQKPPHQRGR…RGPPPKMRES (69 aa). Residues 100 to 121 show a composition bias toward basic residues; that stretch reads KPPHQRGRFRNMRNSRSGRGRN. A Phosphothreonine modification is found at Thr-128. Residues 147-156 are compositionally biased toward basic residues; that stretch reads GRGMGKKFGH. The tract at residues 291 to 305 is RNA gate; the sequence is EFDLLTVNESSVEPP.

The protein belongs to the eIF-3 subunit D family. Component of the eukaryotic translation initiation factor 3 (eIF-3) complex. The eIF-3 complex interacts with pix.

It localises to the cytoplasm. MRNA cap-binding component of the eukaryotic translation initiation factor 3 (eIF-3) complex, which is involved in protein synthesis of a specialized repertoire of mRNAs and, together with other initiation factors, stimulates binding of mRNA and methionyl-tRNAi to the 40S ribosome. The eIF-3 complex specifically targets and initiates translation of a subset of mRNAs involved in cell proliferation. In the eIF-3 complex, eif3d specifically recognizes and binds the 7-methylguanosine cap of a subset of mRNAs. The sequence is that of Eukaryotic translation initiation factor 3 subunit D-1 from Drosophila yakuba (Fruit fly).